The primary structure comprises 256 residues: 5-keto-4-deoxy-D-glucarate aldolase (256 aa).

The active-site Proton acceptor is the H50. Q151 is a binding site for substrate. E153 provides a ligand contact to Mg(2+). Substrate-binding residues include S178 and D179. D179 provides a ligand contact to Mg(2+).

This sequence belongs to the HpcH/HpaI aldolase family. KDGluc aldolase subfamily. As to quaternary structure, homohexamer; trimer of dimers. Requires Mg(2+) as cofactor.

It catalyses the reaction 5-dehydro-4-deoxy-D-glucarate = 2-hydroxy-3-oxopropanoate + pyruvate. The enzyme catalyses 2-dehydro-3-deoxy-D-glucarate = 2-hydroxy-3-oxopropanoate + pyruvate. Its pathway is carbohydrate acid metabolism; galactarate degradation; D-glycerate from galactarate: step 2/3. Functionally, catalyzes the reversible retro-aldol cleavage of both 5-keto-4-deoxy-D-glucarate and 2-keto-3-deoxy-D-glucarate to pyruvate and tartronic semialdehyde. This is 5-keto-4-deoxy-D-glucarate aldolase from Salmonella arizonae (strain ATCC BAA-731 / CDC346-86 / RSK2980).